The chain runs to 476 residues: Flavin-dependent halogenase otaD (476 aa).

Positions 14 and 17 each coordinate FAD. Residues Ser304 and Gly305 each contribute to the chloride site. Residue Val306 coordinates FAD.

It belongs to the flavin-dependent halogenase family.

It carries out the reaction ochratoxin B + FADH2 + chloride + O2 = ochratoxin A + FAD + 2 H2O. Its pathway is mycotoxin biosynthesis. Functionally, flavin-dependent halogenase; part of the gene cluster that mediates the biosynthesis of ochratoxin A (OTA), a mycotoxin composed of a chlorinated type I polyketide dihydroisocoumarin moiety linked to L-phenylalanine, and demonstrated to have nephrotoxic, immunotoxic, genotoxic, neurotoxic, and teratogenic properties. OtaD chlorinates ochratoxin B (OTB) at the C-5 position to form OTA. The pathway begins with the highly reducing polyketide synthase otaA that catalyzes the formation of the isocoumarin group during the initial stages of biosynthesis, starting from one acetate and 4 malonate units, to originate the characteristic pentaketide skeleton 7-methylmellein (7-MM) of the OTA molecule. The newly identified cyclase otaY might be involved in the polyketide cyclization reaction during the initial steps of the OTA biosynthesis. 7-MM is then oxidized into 7-carboxymellein (also called ochratoxin beta) by the cytochrome P450 monooxygenase otaC. The NRPS encoded by the otaB gene is involved in the linking of phenylalanine to the dihydroisocoumarin ring. The reaction catalyzed by NRPS results in the production of ochratoxin B (OTB), which is the non-chlorinated analog of OTA and which subsequently serves as the substrate of the halogenase otaD for chlorination activity to form the final molecular structure of OTA, containing a chlorine atom in the C-5 position of the molecule. In Aspergillus niger (strain ATCC MYA-4892 / CBS 513.88 / FGSC A1513), this protein is Flavin-dependent halogenase otaD.